Consider the following 299-residue polypeptide: GTPase Era (299 aa).

Residues Lys-5 to Glu-172 form the Era-type G domain. Residues Gly-13–Ser-20 are G1. Gly-13–Ser-20 lines the GTP pocket. The G2 stretch occupies residues Gln-39 to Asn-43. The interval Asp-60–Gly-63 is G3. GTP is bound by residues Asp-60–Ile-64 and Asn-122–Asp-125. The G4 stretch occupies residues Asn-122–Asp-125. The G5 stretch occupies residues Ile-151 to Ala-153. A KH type-2 domain is found at Thr-203 to Lys-280.

Belongs to the TRAFAC class TrmE-Era-EngA-EngB-Septin-like GTPase superfamily. Era GTPase family. As to quaternary structure, monomer.

The protein localises to the cytoplasm. Its subcellular location is the cell membrane. Functionally, an essential GTPase that binds both GDP and GTP, with rapid nucleotide exchange. Plays a role in 16S rRNA processing and 30S ribosomal subunit biogenesis and possibly also in cell cycle regulation and energy metabolism. This is GTPase Era from Staphylococcus haemolyticus (strain JCSC1435).